The following is a 177-amino-acid chain: Ribulose bisphosphate carboxylase small subunit, chloroplastic 3 (177 aa).

The transit peptide at Met1 to Ser56 directs the protein to the chloroplast.

The protein belongs to the RuBisCO small chain family. In terms of assembly, heterohexadecamer of 8 large and 8 small subunits.

It is found in the plastid. Its subcellular location is the chloroplast. RuBisCO catalyzes two reactions: the carboxylation of D-ribulose 1,5-bisphosphate, the primary event in carbon dioxide fixation, as well as the oxidative fragmentation of the pentose substrate. Both reactions occur simultaneously and in competition at the same active site. Although the small subunit is not catalytic it is essential for maximal activity. This Lemna gibba (Swollen duckweed) protein is Ribulose bisphosphate carboxylase small subunit, chloroplastic 3.